A 351-amino-acid chain; its full sequence is Cell shape-determining protein MreB (351 aa).

ATP contacts are provided by residues 20–22, 169–171, 217–220, and 299–302; these read TAN, GGT, ERIK, and GGAL.

Belongs to the FtsA/MreB family. As to quaternary structure, forms polymers.

The protein resides in the cytoplasm. Forms membrane-associated dynamic filaments that are essential for cell shape determination. Acts by regulating cell wall synthesis and cell elongation, and thus cell shape. A feedback loop between cell geometry and MreB localization may maintain elongated cell shape by targeting cell wall growth to regions of negative cell wall curvature. This chain is Cell shape-determining protein MreB, found in Haemophilus influenzae (strain ATCC 51907 / DSM 11121 / KW20 / Rd).